The following is a 268-amino-acid chain: Ribosomal RNA small subunit methyltransferase A (268 aa).

6 residues coordinate S-adenosyl-L-methionine: asparagine 12, leucine 14, glycine 38, glutamate 59, aspartate 82, and asparagine 107.

The protein belongs to the class I-like SAM-binding methyltransferase superfamily. rRNA adenine N(6)-methyltransferase family. RsmA subfamily.

It is found in the cytoplasm. The enzyme catalyses adenosine(1518)/adenosine(1519) in 16S rRNA + 4 S-adenosyl-L-methionine = N(6)-dimethyladenosine(1518)/N(6)-dimethyladenosine(1519) in 16S rRNA + 4 S-adenosyl-L-homocysteine + 4 H(+). Specifically dimethylates two adjacent adenosines (A1518 and A1519) in the loop of a conserved hairpin near the 3'-end of 16S rRNA in the 30S particle. May play a critical role in biogenesis of 30S subunits. This is Ribosomal RNA small subunit methyltransferase A from Onion yellows phytoplasma (strain OY-M).